A 728-amino-acid chain; its full sequence is U-box domain-containing protein 4 (728 aa).

Residues 296–370 (SVPKEFSCPI…SQWCGVYGLQ (75 aa)) form the U-box domain. ARM repeat units lie at residues 441 to 483 (GAIP…EQEG) and 526 to 568 (GAVE…ESCA).

The enzyme catalyses S-ubiquitinyl-[E2 ubiquitin-conjugating enzyme]-L-cysteine + [acceptor protein]-L-lysine = [E2 ubiquitin-conjugating enzyme]-L-cysteine + N(6)-ubiquitinyl-[acceptor protein]-L-lysine.. It participates in protein modification; protein ubiquitination. Functionally, possesses E3 ubiquitin-protein ligase in vitro. In Oryza sativa subsp. japonica (Rice), this protein is U-box domain-containing protein 4 (PUB4).